The primary structure comprises 255 residues: Ly6/PLAUR domain-containing protein 8 (255 aa).

Positions 1 to 20 are cleaved as a signal peptide; that stretch reads MRGVFIAGVIAAFAITVVDS. N-linked (GlcNAc...) asparagine glycans are attached at residues Asn22, Asn30, Asn53, Asn72, Asn76, Asn105, Asn115, Asn128, Asn154, Asn169, Asn179, Asn200, and Asn210. The 50-residue stretch at 121 to 170 folds into the UPAR/Ly6 domain; the sequence is CMSCYGHNKTLCEEKPQKCYEGEQCVFIIAEMVNGSGRVELKGCSDISNS. The GPI-anchor amidated serine moiety is linked to residue Ser233. Residues 234-255 constitute a propeptide, removed in mature form; the sequence is MGTKASFTSSIFGSLLLLKLLF.

It belongs to the CNF-like-inhibitor family. Highly N-glycosylated. Not O-glycosylated. In terms of processing, GPI-anchored. The GPI-anchor is cleaved, leading to secretion into the colonic lumen. As to expression, specifically present in enterocytes located at the uppermost epithelial layer of the colon (at protein level). Exclusively expressed in the large intestine: specifically expressed on the apical surface of epithelial cells located at the uppermost layer of the colonic gland.

It is found in the cell membrane. The protein resides in the secreted. Functionally, secreted protein specifically required to prevent invasion of Gram-negative bacteria in the inner mucus layer of the colon epithelium, a portion of the large intestine which is free of commensal microbiota. Prevents invasion of flagellated microbiota by binding to the flagellum of bacteria, such as P.mirabilis, thereby inhibiting bacterial motility in the intestinal lumen. Segregation of intestinal bacteria and epithelial cells in the colon is required to preserve intestinal homeostasis. This is Ly6/PLAUR domain-containing protein 8 from Mus musculus (Mouse).